The primary structure comprises 771 residues: Chaperone protein dnaK3 (771 aa).

The residue at position 198 (Thr-198) is a Phosphothreonine; by autocatalysis. Residues 624–771 form a disordered region; it reads FDDDDDYYNR…GWDDDDDDWF (148 aa). Composition is skewed to basic and acidic residues over residues 630–652 and 708–734; these read YYNR…RYDD and YDDR…RENA.

It belongs to the heat shock protein 70 family.

In terms of biological role, acts as a chaperone. The sequence is that of Chaperone protein dnaK3 (dnaK3) from Synechocystis sp. (strain ATCC 27184 / PCC 6803 / Kazusa).